The primary structure comprises 502 residues: Mannitol 2-dehydrogenase (502 aa).

Residue 37-48 participates in NAD(+) binding; sequence IVHIGVGGFHRA.

Belongs to the mannitol dehydrogenase family. In terms of assembly, monomer.

The enzyme catalyses D-mannitol + NAD(+) = D-fructose + NADH + H(+). Catalyzes the NAD(H)-dependent interconversion of D-fructose and D-mannitol in the mannitol metabolic pathway. The sequence is that of Mannitol 2-dehydrogenase from Neosartorya fischeri (strain ATCC 1020 / DSM 3700 / CBS 544.65 / FGSC A1164 / JCM 1740 / NRRL 181 / WB 181) (Aspergillus fischerianus).